The sequence spans 498 residues: Cytochrome P450 monooxygenase apdB (498 aa).

A helical transmembrane segment spans residues 20–40 (ASPQVFKLFVLILFVLLVLKI). Heme is bound at residue cysteine 457.

This sequence belongs to the cytochrome P450 family. It depends on heme as a cofactor.

It localises to the membrane. It functions in the pathway secondary metabolite biosynthesis. Functionally, cytochrome P450 monooxygenase; part of the gene cluster that mediates the biosynthesis of aspyridones. The polyketide-amino acid backbone preaspyridone A is first assembled by the PKS-NRPS hybrid apdA. The assembly of preaspyridone A is initiated by loading of malonyl-CoA onto apdA, followed by decarboxylation to yield the acetyl starter unit. The growing polyketide chain then elongates into a tetraketide. The adpA PKS module catalyzes three Claisen condensations, as well as beta-keto processing and methylation. Alpha-methylation step during polyketide synthesis is a prerequisite and a key checkpoint for chain transfer between PKS and NRPS modules. The downstream NRPS module contains the condensation (C), adenylation (A), and thiolation (T) domains and catalyzes the incorporation of tyrosine via the formation of the L-tyrosinyl-thioester and the amide linkage between L-tyrosinyl-thioester and the tetraketide. The bimodular assembly line is terminated with a reductase (R) domain that facilitates formation and release of the tetramic acid product. Because apdA lacks a designated enoylreductase (ER) domain, the required activity is provided the enoyl reductase apdC. ApdC appears to operate with different stereoselectivity in different PKS cycle. Combined with apdC, apdA is proposed to synthesize preaspyridone A via about 20 enzymatic steps. A number of oxidative steps performed successively by the cytochrome P450 monooxygenases apdE and apdB are required for the conversion of preaspyridone A to aspyridone A. The cytochrome P450 monooxygenase apdE is responsible for the oxidative dephenylation of preaspyridone A. Finally, the predicted FAD-dependent monooxygenase apdD and the acyl-CoA dehydrogenase apdG may be involved in the transformation of aspyridone A into aspyridone B. This is Cytochrome P450 monooxygenase apdB from Emericella nidulans (strain FGSC A4 / ATCC 38163 / CBS 112.46 / NRRL 194 / M139) (Aspergillus nidulans).